The following is a 178-amino-acid chain: Ribosomal RNA small subunit methyltransferase G (178 aa).

S-adenosyl-L-methionine contacts are provided by residues Gly-54, Leu-59, 105–106 (LE), and Arg-120.

It belongs to the methyltransferase superfamily. RNA methyltransferase RsmG family.

Its subcellular location is the cytoplasm. It carries out the reaction guanosine(527) in 16S rRNA + S-adenosyl-L-methionine = N(7)-methylguanosine(527) in 16S rRNA + S-adenosyl-L-homocysteine. Functionally, specifically methylates the N7 position of guanine in position 527 of 16S rRNA. This Helicobacter pylori (strain HPAG1) protein is Ribosomal RNA small subunit methyltransferase G.